The following is a 347-amino-acid chain: Methionine import ATP-binding protein MetN (347 aa).

Residues 2–241 (IKLEGVSKTY…PATRLGRDFL (240 aa)) form the ABC transporter domain. Position 38–45 (38–45 (GLSGAGKS)) interacts with ATP.

Belongs to the ABC transporter superfamily. Methionine importer (TC 3.A.1.24) family. The complex is composed of two ATP-binding proteins (MetN), two transmembrane proteins (MetI) and a solute-binding protein (MetQ).

The protein localises to the cell inner membrane. It catalyses the reaction L-methionine(out) + ATP + H2O = L-methionine(in) + ADP + phosphate + H(+). The catalysed reaction is D-methionine(out) + ATP + H2O = D-methionine(in) + ADP + phosphate + H(+). Its function is as follows. Part of the ABC transporter complex MetNIQ involved in methionine import. Responsible for energy coupling to the transport system. This chain is Methionine import ATP-binding protein MetN, found in Chromohalobacter salexigens (strain ATCC BAA-138 / DSM 3043 / CIP 106854 / NCIMB 13768 / 1H11).